Consider the following 145-residue polypeptide: Protein phosphatase 1 regulatory subunit 14D (145 aa).

A compositionally biased stretch (low complexity) spans 1 to 14 (MLSSSPASCTSPSP). Positions 1–59 (MLSSSPASCTSPSPDGENPCKKVHWASGRRRTSSTDSESKSHPDSSKIPRSRRPSRLTV) are disordered. The interaction with protein phosphatase 1 stretch occupies residues 21–25 (KKVHW). The span at 21–32 (KKVHWASGRRRT) shows a compositional bias: basic residues. A compositionally biased stretch (basic and acidic residues) spans 37 to 47 (SESKSHPDSSK). Residue Thr58 is modified to Phosphothreonine.

The protein belongs to the PP1 inhibitor family. Post-translationally, phosphorylated on several residues. As to expression, detected in colon, intestine, kidney and brain cortex.

The protein localises to the cytoplasm. Inhibitor of PPP1CA. Has inhibitory activity only when phosphorylated, creating a molecular switch for regulating the phosphorylation status of PPP1CA substrates and smooth muscle contraction. In Homo sapiens (Human), this protein is Protein phosphatase 1 regulatory subunit 14D (PPP1R14D).